Reading from the N-terminus, the 274-residue chain is Peroxiredoxin-4 (274 aa).

Residues 1–40 form the signal peptide; the sequence is MEARSKLLDGTTASRRWTRKLVLLLPPLLLFLLRTESLQG. Residues 82 to 240 enclose the Thioredoxin domain; that stretch reads AKISKPAPYW…TLRLVQAFQY (159 aa). Residue cysteine 127 is the Cysteine sulfenic acid (-SOH) intermediate of the active site.

It belongs to the peroxiredoxin family. AhpC/Prx1 subfamily. As to quaternary structure, homodimer; disulfide-linked, upon oxidation. 5 homodimers assemble to form a ring-like decamer. The enzyme can be inactivated by further oxidation of the cysteine sulfenic acid (C(P)-SOH) to sulphinic acid (C(P)-SO2H) and sulphonic acid (C(P)-SO3H) instead of its condensation to a disulfide bond.

Its subcellular location is the cytoplasm. The protein resides in the endoplasmic reticulum. It catalyses the reaction a hydroperoxide + [thioredoxin]-dithiol = an alcohol + [thioredoxin]-disulfide + H2O. In terms of biological role, thiol-specific peroxidase that catalyzes the reduction of hydrogen peroxide and organic hydroperoxides to water and alcohols, respectively. Plays a role in cell protection against oxidative stress by detoxifying peroxides and as sensor of hydrogen peroxide-mediated signaling events. Regulates the activation of NF-kappa-B in the cytosol by a modulation of I-kappa-B-alpha phosphorylation. This Mus musculus (Mouse) protein is Peroxiredoxin-4 (Prdx4).